Here is an 86-residue protein sequence, read N- to C-terminus: Small ribosomal subunit protein uS17 (86 aa).

It belongs to the universal ribosomal protein uS17 family. As to quaternary structure, part of the 30S ribosomal subunit.

In terms of biological role, one of the primary rRNA binding proteins, it binds specifically to the 5'-end of 16S ribosomal RNA. The sequence is that of Small ribosomal subunit protein uS17 from Dehalococcoides mccartyi (strain ATCC BAA-2266 / KCTC 15142 / 195) (Dehalococcoides ethenogenes (strain 195)).